The chain runs to 298 residues: MFKGILVSLLASFLFGYMYYFSTLLKPLSGTDIFGYRMIFTFPFVLLSVTLFKQKAALIERLKRIQKRPHLALSYLLCGLLMGFQMWLFLWAPNNGSSLSVSFGYLLLPIVMVAAGRVFFKERISTFKFIAVIIATLGVISNIVLKGGLSWEAIVICLGYTAYFSIRKALKNTDLASFCLEMLSLMPVSIYFALQTDFATVQQTNPFIWGXLVLLGLISGTALIAYVIASNMLPMNLLGLLGYVETIMMLCVSFLIGEQIDSESYPLFICLVIAMILVMVDGVYKHTQKEVYKCHLKK.

The next 10 membrane-spanning stretches (helical) occupy residues 5-23, 33-52, 72-91, 101-120, 127-145, 149-166, 175-194, 207-229, 238-260, and 265-284; these read ILVSLLASFLFGYMYYFST, IFGYRMIFTFPFVLLSVTLF, ALSYLLCGLLMGFQMWLFLW, VSFGYLLLPIVMVAAGRVFF, FKFIAVIIATLGVISNIVL, LSWEAIVICLGYTAYFSI, LASFCLEMLSLMPVSIYFAL, FIWGXLVLLGLISGTALIAYVIA, LGLLGYVETIMMLCVSFLIGEQI, and YPLFICLVIAMILVMVDGVY. The region spanning 13-144 is the EamA domain; the sequence is FLFGYMYYFS…ATLGVISNIV (132 aa).

Belongs to the EamA transporter family.

The protein resides in the cell membrane. This is an uncharacterized protein from Haemophilus influenzae (strain ATCC 51907 / DSM 11121 / KW20 / Rd).